Reading from the N-terminus, the 315-residue chain is uncharacterized protein (315 aa).

2 coiled-coil regions span residues alanine 184–glutamine 212 and glutamate 238–lysine 275.

It belongs to the IIV-6 287R family.

This is an uncharacterized protein from Acheta domesticus (House cricket).